A 655-amino-acid chain; its full sequence is A-type voltage-gated potassium channel KCND3 (655 aa).

At 1-182 (MAAGVAAWLP…FENPHTSTLA (182 aa)) the chain is on the cytoplasmic side. The interval 6–21 (AAWLPFARAAAIGWMP) is interaction with KCNIP1 and KCNIP2. The segment at 70-78 (EKEFFFNED) is interaction with KCNIP1. Residues H104, C110, C131, and C132 each contribute to the Zn(2+) site. At S153 the chain carries Phosphoserine. The helical transmembrane segment at 183-204 (LVFYYVTGFFIAVSVITNVVET) threads the bilayer. Over 205–223 (VPCGTVPGSKELPCGERYS) the chain is Extracellular. Residues 224 to 246 (VAFFCLDTACVMIFTVEYLLRLF) traverse the membrane as a helical segment. Over 247 to 253 (AAPSRYR) the chain is Cytoplasmic. A helical transmembrane segment spans residues 254 to 277 (FIRSVMSIIDVVAIMPYYIGLVMT). The Extracellular segment spans residues 278–283 (NNEDVS). A helical; Voltage-sensor membrane pass occupies residues 284–306 (GAFVTLRVFRVFRIFKFSRHSQG). Residues 307–318 (LRILGYTLKSCA) are Cytoplasmic-facing. A helical transmembrane segment spans residues 319–343 (SELGFLLFSLTMAIIIFATVMFYAE). The Extracellular portion of the chain corresponds to 344-352 (KGSSASKFT). Positions 353 to 366 (SIPASFWYTIVTMT) form an intramembrane region, helical. T367, L368, G369, and Y370 together coordinate K(+). Residues 367-372 (TLGYGD) carry the Selectivity filter motif. Residues 367–374 (TLGYGDMV) lie within the membrane without spanning it. The helical transmembrane segment at 378–400 (IAGKIFGSICSLSGVLVIALPVP) threads the bilayer. Over 401–655 (VIVSNFSRIY…ASNVVKVSAL (255 aa)) the chain is Cytoplasmic. Position 459 is a phosphothreonine (T459). The tract at residues 470–487 (SLIESQHHHLLHCLEKTT) is interaction with KCNIP1 and KCNIP2. The tract at residues 472 to 487 (IESQHHHLLHCLEKTT) is mediates dendritic targeting. The segment covering 525 to 548 (MQNYPSTRSPSLSSHPGLTTTCCS) has biased composition (polar residues). The interval 525–565 (MQNYPSTRSPSLSSHPGLTTTCCSRRSKKTTHLPNSNLPAT) is disordered. S569 is modified (phosphoserine; by CaMK2D). At S585 the chain carries Phosphoserine. A disordered region spans residues 615 to 655 (ISIPTPPALTPEGESRPPPASPGPNTNIPSIASNVVKVSAL). The segment covering 637-647 (GPNTNIPSIAS) has biased composition (polar residues).

The protein belongs to the potassium channel family. D (Shal) (TC 1.A.1.2) subfamily. Kv4.3/KCND3 sub-subfamily. Homotetramer. Heterotetramer with KCND2. Associates with the regulatory subunits KCNIP3 and KCNIP4. Interacts with KCNE1, KCNE2, SCN1B and KCNAB1 and DLG1. Component of heteromultimeric potassium channels. Identified in potassium channel complexes containing KCND1, KCND2, KCND3, KCNIP1, KCNIP2, KCNIP3, KCNIP4, DPP6 and DPP10. Interacts with KCNIP1; each KCNIP1 monomer interacts with two adjacent KCND3 subunits, through both the N-terminal inactivation ball of a KCND3 subunit and a C-terminal helix from the adjacent KCND3 subunit, clamping them together; this interaction stabilizes the tetrameric form and modulates the channel gating kinetics namely channel activation and inactivation kinetics and rate of recovery from inactivation. Interacts with DPP6; this interaction modulates the channel gating kinetics namely channel activation and inactivation kinetics and rate of recovery from inactivation. Interacts with KCNIP2; each KCNIP2 monomer interacts with two adjacent KCND3 subunits, through both the N-terminal inactivation ball of a KCND3 subunit and a C-terminal helix from the adjacent KCND3 subunit, clamping them together; this interaction modulates the channel gating kinetics. Regulated through phosphorylation at Ser-569 by CaMK2D. As to expression, highly expressed in heart and brain, in particular in cortex, cerebellum, amygdala and caudate nucleus. Detected at lower levels in liver, skeletal muscle, kidney and pancreas.

It localises to the cell membrane. The protein localises to the sarcolemma. Its subcellular location is the cell projection. The protein resides in the dendrite. It catalyses the reaction K(+)(in) = K(+)(out). In terms of biological role, pore-forming (alpha) subunit of voltage-gated A-type potassium channels that mediates transmembrane potassium transport in excitable membranes, in brain and heart. In cardiomyocytes, may generate the transient outward potassium current I(To). In neurons, may conduct the transient subthreshold somatodendritic A-type potassium current (ISA). Kinetics properties are characterized by fast activation at subthreshold membrane potentials, rapid inactivation, and quick recovery from inactivation. Channel properties are modulated by interactions with regulatory subunits. Interaction with the regulatory subunits KCNIP1 or KCNIP2 modulates the channel gating kinetics namely channel activation and inactivation kinetics and rate of recovery from inactivation. Likewise, interaction with DPP6 modulates the channel gating kinetics namely channel activation and inactivation kinetics. The sequence is that of A-type voltage-gated potassium channel KCND3 (KCND3) from Homo sapiens (Human).